Consider the following 874-residue polypeptide: Alanine--tRNA ligase (874 aa).

Residues H563, H567, C665, and H669 each contribute to the Zn(2+) site.

Belongs to the class-II aminoacyl-tRNA synthetase family. Zn(2+) serves as cofactor.

It localises to the cytoplasm. The catalysed reaction is tRNA(Ala) + L-alanine + ATP = L-alanyl-tRNA(Ala) + AMP + diphosphate. Its function is as follows. Catalyzes the attachment of alanine to tRNA(Ala) in a two-step reaction: alanine is first activated by ATP to form Ala-AMP and then transferred to the acceptor end of tRNA(Ala). Also edits incorrectly charged Ser-tRNA(Ala) and Gly-tRNA(Ala) via its editing domain. This chain is Alanine--tRNA ligase, found in Aeromonas salmonicida (strain A449).